Consider the following 1024-residue polypeptide: Protein tiptop (1024 aa).

Over residues 20–35 (ELTSPRCQSRDSNTSA) the composition is skewed to polar residues. Disordered regions lie at residues 20–40 (ELTS…AGAG) and 138–215 (EGEV…ISAD). Residues 159–175 (DDQEEDQEQDQEQEQEQ) are compositionally biased toward acidic residues. The C2H2-type 1 zinc finger occupies 317 to 341 (FKCVWCKQSFSTLANLTAHMKETQH). Positions 350 to 392 (LPTGGVGTPSAPPPTRLATSASNSACSSSSSSTSSSSNSSKSE) are disordered. A compositionally biased stretch (low complexity) spans 368-391 (TSASNSACSSSSSSTSSSSNSSKS). The segment at 426–450 (LKCMWCGQSFRSLAEMTSHMQETQH) adopts a C2H2-type 2 zinc-finger fold. Disordered stretches follow at residues 466 to 489 (GDER…SSPS), 519 to 576 (AQKS…SLDS), 712 to 759 (SRDR…IKAE), 786 to 818 (FSME…SLLA), and 868 to 891 (ETTD…ASAT). Residues 477-489 (VPSTSTAAPSSPS) are compositionally biased toward low complexity. A C2H2-type 3 zinc finger spans residues 499-523 (LTCKVCDQAFGSLKELSTHMAQKSH). A compositionally biased stretch (low complexity) spans 527–537 (SPAPSASPPAA). The span at 543-558 (KRGRQNRNEKRKKSLP) shows a compositional bias: basic residues. Low complexity predominate over residues 718–729 (SESSSASRVESS). Residues 745 to 755 (TPAPPPPPPPT) show a composition bias toward pro residues. The segment covering 786 to 795 (FSMEACRESP) has biased composition (basic and acidic residues). Over residues 796-808 (RSVSKSPAPQTER) the composition is skewed to polar residues. The segment covering 874–891 (STGLRSASSAGSSTASAT) has biased composition (low complexity). The segment at 926-949 (IKCSYCDTPFASKGAYRHHLSKVH) adopts a C2H2-type 4 zinc-finger fold. The tract at residues 954 to 1004 (AGEDSPRLKSPAVQSPRSMPLASPRRSASRSPATGSQQPPPSPTISPYDES) is disordered. The span at 968–990 (SPRSMPLASPRRSASRSPATGSQ) shows a compositional bias: low complexity.

It belongs to the teashirt C2H2-type zinc-finger protein family. As to expression, expression in the Malpighian tubules (MTs) and stomatogastric nervous system starts at embryonic stage 10. At stage 11, expression in the head domain is initiated in the clypeolabrum in two bilaterally symmetric clusters of cells. At stage 12, expression appears in the central nervous system (CNS) of the trunk and the epidermis. The staining in the hindgut is maintained throughout embryogenesis. At stage 13, expression is present in elongating MTs. The anterior staining is detected in cells that invaginate into the stomodeum and by stage 15 onwards, in cells close to the pharynx. Also expressed in cells of the brain, the second constriction of the gut, the trunk epidermis, the anterior segments of the CNS (the three thoracic and the first two abdominal segments) and in the MTs. From stage 12 onwards, tsh and tio are colocalized in some cells.

The protein localises to the nucleus. Tiptop (tio) and teashirt (tsh) have, on the whole, common activities. Tio and tsh repress each other's expression and tsh has a crucial role for trunk patterning that is in part masked by ectopic expression of tiptop. Both genes share a common activity required for the activation of Ser and svb and the maintenance of en and wg. This chain is Protein tiptop (tio), found in Drosophila melanogaster (Fruit fly).